The sequence spans 238 residues: Proenkephalin-A (238 aa).

Positions 1-25 (MAASALSTCLWMLVLGTCVSLVVGT) are cleaved as a signal peptide. 3 disulfide bridges follow: C27–C50, C31–C54, and C34–C66. The tract at residues 76-103 (QSPLASQQDQERVDAMMADEEDATSPEH) is disordered. Propeptides lie at residues 124–167 (SSAS…AEAV), 177–195 (ADRG…GRVL), and 206–230 (VGRP…SELQ).

Belongs to the opioid neuropeptide precursor family. As to expression, expressed by the venom gland. Moderately expressed in the venom gland transcriptome.

It is found in the secreted. Functionally, met-enkephalins compete with and mimic the effects of opiate drugs. They play a role in a number of physiologic functions, including pain perception and responses to stress. Enkephalin peptides found in Meiacanthus fangblennies induce physiological effects via their interaction with delta-type opioid receptors (OPRD1) (tested on M.grammistes). Therefore, finding a proenkephalin sequence in M.atrodorsalis venom suggests that this protein act in the same manner. The sequence is that of Proenkephalin-A from Meiacanthus atrodorsalis (Forktail blenny).